The sequence spans 373 residues: Putative glutamate--cysteine ligase 2-1 (373 aa).

Belongs to the glutamate--cysteine ligase type 2 family. YbdK subfamily.

It catalyses the reaction L-cysteine + L-glutamate + ATP = gamma-L-glutamyl-L-cysteine + ADP + phosphate + H(+). Its function is as follows. ATP-dependent carboxylate-amine ligase which exhibits weak glutamate--cysteine ligase activity. The polypeptide is Putative glutamate--cysteine ligase 2-1 (Legionella pneumophila (strain Paris)).